The primary structure comprises 589 residues: Nicotinate phosphoribosyltransferase (589 aa).

Residues 1–30 form a disordered region; that stretch reads MSQSNTPLKRKKTENGYSENGSTTGATSNQ. The span at 15 to 30 shows a compositional bias: polar residues; sequence NGYSENGSTTGATSNQ. Residues Tyr68 and Thr256 each coordinate nicotinate. The residue at position 259 (His259) is a Phosphohistidine. Arg356 lines the nicotinate pocket. Residue Thr418 participates in 5-phospho-alpha-D-ribose 1-diphosphate binding.

The protein belongs to the NAPRTase family. The cofactor is Mg(2+). It depends on Mn(2+) as a cofactor. In terms of processing, transiently phosphorylated on a His residue during the reaction cycle. Phosphorylation strongly increases the affinity for substrates and increases the rate of nicotinate D-ribonucleotide production. Dephosphorylation regenerates the low-affinity form of the enzyme, leading to product release.

The catalysed reaction is nicotinate + 5-phospho-alpha-D-ribose 1-diphosphate + ATP + H2O = nicotinate beta-D-ribonucleotide + ADP + phosphate + diphosphate. It functions in the pathway cofactor biosynthesis; NAD(+) biosynthesis; nicotinate D-ribonucleotide from nicotinate: step 1/1. Catalyzes the first step in the biosynthesis of NAD from nicotinic acid, the ATP-dependent synthesis of beta-nicotinate D-ribonucleotide from nicotinate and 5-phospho-D-ribose 1-phosphate. Helps prevent cellular oxidative stress via its role in NAD biosynthesis. The chain is Nicotinate phosphoribosyltransferase (naprt) from Dictyostelium discoideum (Social amoeba).